The following is a 226-amino-acid chain: Isoprenyl transferase (226 aa).

Residue aspartate 12 is part of the active site. Mg(2+) is bound at residue aspartate 12. Substrate contacts are provided by residues 13–16 (GNAR), tryptophan 17, lysine 25, histidine 29, and 57–59 (SSE). Catalysis depends on asparagine 60, which acts as the Proton acceptor. Substrate-binding positions include tryptophan 61, arginine 63, arginine 174, and 180–182 (RIS). A Mg(2+)-binding site is contributed by glutamate 193.

The protein belongs to the UPP synthase family. As to quaternary structure, homodimer. Mg(2+) is required as a cofactor.

Functionally, catalyzes the condensation of isopentenyl diphosphate (IPP) with allylic pyrophosphates generating different type of terpenoids. The protein is Isoprenyl transferase of Rickettsia sibirica (strain ATCC VR-151 / 246).